Reading from the N-terminus, the 400-residue chain is Enoyl-[acyl-carrier-protein] reductase [NADH] (400 aa).

NAD(+) is bound by residues 48-53 (GASTGY), 74-75 (FE), 111-112 (DA), and 139-140 (LA). Tyr225 is a binding site for substrate. Tyr235 acts as the Proton donor in catalysis. NAD(+) is bound by residues Lys244 and 273-275 (VVT).

This sequence belongs to the TER reductase family. Monomer.

The enzyme catalyses a 2,3-saturated acyl-[ACP] + NAD(+) = a (2E)-enoyl-[ACP] + NADH + H(+). Its pathway is lipid metabolism; fatty acid biosynthesis. Functionally, involved in the final reduction of the elongation cycle of fatty acid synthesis (FAS II). Catalyzes the reduction of a carbon-carbon double bond in an enoyl moiety that is covalently linked to an acyl carrier protein (ACP). The polypeptide is Enoyl-[acyl-carrier-protein] reductase [NADH] (Burkholderia vietnamiensis (strain G4 / LMG 22486) (Burkholderia cepacia (strain R1808))).